Reading from the N-terminus, the 313-residue chain is Curved DNA-binding protein (313 aa).

The J domain occupies aspartate 5 to glycine 69. Residues glycine 71 to valine 93 form a disordered region.

Its subcellular location is the cytoplasm. It localises to the nucleoid. DNA-binding protein that preferentially recognizes a curved DNA sequence. It is probably a functional analog of DnaJ; displays overlapping activities with DnaJ, but functions under different conditions, probably acting as a molecular chaperone in an adaptive response to environmental stresses other than heat shock. Lacks autonomous chaperone activity; binds native substrates and targets them for recognition by DnaK. Its activity is inhibited by the binding of CbpM. The sequence is that of Curved DNA-binding protein from Coxiella burnetii (strain Dugway 5J108-111).